A 203-amino-acid polypeptide reads, in one-letter code: Superoxide dismutase [Mn] (203 aa).

The Mn(2+) site is built by H27, H81, D167, and H171.

This sequence belongs to the iron/manganese superoxide dismutase family. As to quaternary structure, homodimer. Requires Mn(2+) as cofactor.

The catalysed reaction is 2 superoxide + 2 H(+) = H2O2 + O2. Destroys superoxide anion radicals which are normally produced within the cells and which are toxic to biological systems. This chain is Superoxide dismutase [Mn] (sodA), found in Buchnera aphidicola subsp. Acyrthosiphon pisum (strain APS) (Acyrthosiphon pisum symbiotic bacterium).